We begin with the raw amino-acid sequence, 318 residues long: MSVWAIGDLQGCYDITQRLLEKINFDPAQDTLWFCGDLVNRGGQSLETLRLVHSLRAHSVVVLGNHDLSLLAIGARSEEEQRKVNPDLLRIVMAEDRDALLDWLRMQKLAHVDRTLGWMMIHAGLAPKWTTQMAEKHAREVEQQLQGGGYRKLLRNMYGDQPGWSPGLSGYDRSRAIINLFTRMRYCTPRGRIATDDKGTPGTQAQGLYPWFEVPGRVERDLKIVCGHWSALGLTITQGVHAIDTGAVWGGKLTALQLDSEELRVVQVPGREVTGPAPVARAPRRPRERQGRQRSRGNRGNAGNAAAGPKPSVDTPQD.

The disordered stretch occupies residues 269-318; it reads PGREVTGPAPVARAPRRPRERQGRQRSRGNRGNAGNAAAGPKPSVDTPQD. Over residues 282–297 the composition is skewed to basic residues; it reads APRRPRERQGRQRSRG. The segment covering 298–311 has biased composition (low complexity); the sequence is NRGNAGNAAAGPKP.

This sequence belongs to the Ap4A hydrolase family.

It carries out the reaction P(1),P(4)-bis(5'-adenosyl) tetraphosphate + H2O = 2 ADP + 2 H(+). Its function is as follows. Hydrolyzes diadenosine 5',5'''-P1,P4-tetraphosphate to yield ADP. The protein is Bis(5'-nucleosyl)-tetraphosphatase, symmetrical of Xanthomonas euvesicatoria pv. vesicatoria (strain 85-10) (Xanthomonas campestris pv. vesicatoria).